Here is an 892-residue protein sequence, read N- to C-terminus: Ataxin-7 (892 aa).

Positions Met-1–Arg-15 are enriched in basic and acidic residues. Disordered stretches follow at residues Met-1 to Ala-74 and Ser-195 to Pro-247. The span at Ala-16 to Gln-38 shows a compositional bias: low complexity. Residues Gln-39–Pro-55 show a composition bias toward pro residues. Residues Ser-195 to Leu-222 are compositionally biased toward low complexity. A Glycyl lysine isopeptide (Lys-Gly) (interchain with G-Cter in SUMO); alternate cross-link involves residue Lys-257. Lys-257 participates in a covalent cross-link: Glycyl lysine isopeptide (Lys-Gly) (interchain with G-Cter in SUMO2); alternate. Disordered regions lie at residues Pro-298 to Asn-328, His-389 to Glu-505, Lys-616 to Ser-730, and Ser-818 to Pro-892. Basic and acidic residues-rich tracts occupy residues Leu-318–Asn-327 and His-389–Asp-403. Residues Lys-334–His-401 enclose the SCA7 domain. 3 stretches are compositionally biased toward pro residues: residues Gln-405–Pro-419, His-448–Cys-458, and Ile-468–Ala-483. A compositionally biased stretch (acidic residues) spans Glu-493–Glu-502. A compositionally biased stretch (polar residues) spans Lys-616–Pro-629. The span at Ser-640 to Arg-669 shows a compositional bias: low complexity. The segment covering Lys-670 to Leu-680 has biased composition (basic residues). Residues Ser-685–Ala-695 show a composition bias toward polar residues. 2 stretches are compositionally biased toward low complexity: residues His-716–Ser-730 and Ser-840–Ser-851.

It belongs to the ataxin-7 family. Component of the SAGA transcription coactivator-HAT complex, at least composed of SUPT3H, GCN5L2, TAF5L, TAF6L, SUPT7L, TADA3L, TAD1L, TAF10, TAF12, TRRAP, TAF9 and ATXN7. The STAGA core complex is associated with a subcomplex required for histone deubiquitination composed of ATXN7L3, ENY2 and USP22. Interacts with SORBS1, PSMC1 and CRX. Interacts with TRRAP, GCN5L2 and TAF10. Interacts with alpha tubulin. Post-translationally, proteolytically cleaved by caspase-7 (CASP7). The cleavage may be involved in SCA7 degeneration: the isoform fragments may exert distinct toxic influences that could contribute to selective neurodegeneration. Sumoylation decreases the aggregation propensity and cellular toxicity of forms with an expanded poly-Gln region but has no effect on subcellular location or interaction with components of the STAGA complex. Isoform a is expressed in CNS, but is expressed predominantly in the peripherical tissues. As to expression, isoform b is expressed in CNS. Also highly expressed in the frontal lobe, skeletal muscle and spinal cord and is expressed at a lower level in the lung, lymphoblast and intestine.

Its subcellular location is the nucleus. It localises to the nucleolus. The protein resides in the nucleus matrix. It is found in the cytoplasm. The protein localises to the cytoskeleton. Its function is as follows. Acts as a component of the SAGA (aka STAGA) transcription coactivator-HAT complex. Mediates the interaction of SAGA complex with the CRX and is involved in CRX-dependent gene activation. Probably involved in tethering the deubiquitination module within the SAGA complex. Necessary for microtubule cytoskeleton stabilization. Involved in neurodegeneration. This is Ataxin-7 (ATXN7) from Homo sapiens (Human).